We begin with the raw amino-acid sequence, 210 residues long: Synaptosomal-associated protein 23 (210 aa).

Met1 is subject to N-acetylmethionine. 4 positions are modified to phosphoserine: Ser5, Ser20, Ser23, and Ser34. The t-SNARE coiled-coil homology 1 domain occupies His14–Leu76. Residues Ser23–Leu76 are a coiled coil. Residues Cys79, Cys80, Cys83, Cys85, and Cys87 are each lipidated (S-palmitoyl cysteine). The disordered stretch occupies residues Gly104–Ser135. Residues Asn109 to Ala133 show a composition bias toward polar residues. Ser110 and Ser160 each carry phosphoserine. The region spanning Asp145–Leu207 is the t-SNARE coiled-coil homology 2 domain.

The protein belongs to the SNAP-25 family. In terms of assembly, homotetramer (via coiled-coil domain), also forms heterotetramers with STX4 and VAMP3. Found in a complex with VAMP8 and STX1A. Found in a complex with VAMP8 and STX4 in pancreas. Interacts simultaneously with SNAPIN and SYN4. Interacts with STX1A. Interacts with STX12. Interacts tightly to multiple syntaxins and synaptobrevins/VAMPs. Interacts with ZDHHC13 (via ANK repeats). Interacts with ZDHHC17 (via ANK repeats). Post-translationally, (Microbial infection) Targeted and hydrolyzed by C.botulinum neurotoxin type A (BoNT/A, botA) which hydrolyzes the 202-Thr-|-Arg-203 bond; the in vitro reaction is not highly efficient. (Microbial infection) Targeted and hydrolyzed by C.botulinum neurotoxin type E (BoNT/E) which hydrolyzes the 185-Arg-|-Ile-186 bond; the in vitro reaction is more efficient than that of BoNT/A. In terms of tissue distribution, expressed in non-neuronal tissues.

Its subcellular location is the cell membrane. It is found in the synapse. The protein localises to the synaptosome. Functionally, essential component of the high affinity receptor for the general membrane fusion machinery and an important regulator of transport vesicle docking and fusion. The chain is Synaptosomal-associated protein 23 (Snap23) from Mus musculus (Mouse).